The following is a 287-amino-acid chain: CBK1 kinase activator protein MOB2 (287 aa).

Positions 1 to 89 are disordered; the sequence is MSFFNFKAFG…QQQEASERSE (89 aa). Tyr33 carries the phosphotyrosine modification. The segment covering 34–44 has biased composition (low complexity); it reads SSPHSSNSRLS. The segment covering 45 to 56 has biased composition (basic residues); sequence LRNKHHSPKRHS. The residue at position 59 (Ser59) is a Phosphoserine. The segment covering 63-83 has biased composition (low complexity); that stretch reads QKSTPQSQQLTSTTPQSQQQE. A Phosphothreonine modification is found at Thr76.

This sequence belongs to the MOB1/phocein family. As to quaternary structure, interacts with protein kinase CBK1 to form the RAM CBK1-MOB2 kinase complex.

The protein localises to the nucleus. The protein resides in the cytoplasm. In terms of biological role, functions as an activator subunit for the CBK1 protein kinase. Part of the regulation of ACE2 activity and cellular morphogenesis (RAM) signaling network. Required for coordinating polarized cell growth during interphase with the onset of mitosis. Required for mother/daughter cell separation after cytokinesis. Also has a role in the prevention of nuclear export of ACE2 from the daughter cell nucleus after mitotic exit. It coordinates ACE2-dependent transcription with mitotic exit network activation. This chain is CBK1 kinase activator protein MOB2 (MOB2), found in Saccharomyces cerevisiae (strain ATCC 204508 / S288c) (Baker's yeast).